A 331-amino-acid polypeptide reads, in one-letter code: Glycerophosphodiester phosphodiesterase 1 (331 aa).

The Cytoplasmic portion of the chain corresponds to 1 to 3 (MWL). A helical transmembrane segment spans residues 4–24 (WEDQGGLLGPFSFVLVLLLVV). The Lumenal segment spans residues 25 to 248 (TRSPFNACVL…PRYSVFWKQS (224 aa)). The GP-PDE domain maps to 65–331 (VSAIAHRGGS…SMLEDCAPHF (267 aa)). Mg(2+) contacts are provided by Glu97 and Asp99. Asn168 carries an N-linked (GlcNAc...) asparagine glycan. Asp174 provides a ligand contact to Mg(2+). Residues 249–269 (VFVVLDILLDWSMHNVLWYLC) traverse the membrane as a helical segment. Over 270-331 (GISAFLMQKD…SMLEDCAPHF (62 aa)) the chain is Cytoplasmic.

Belongs to the glycerophosphoryl diester phosphodiesterase family. In terms of assembly, interacts with PRAF2. Interacts with RGS16. The cofactor is Mg(2+). In terms of processing, N-glycosylated. Widely expressed. Highly expressed in the brain and spinal cord, followed by kidney, liver, and testis. In contrast, little or no expression is detected in the heart or spleen.

The protein resides in the cell membrane. It localises to the cytoplasmic vesicle membrane. The enzyme catalyses sn-glycero-3-phospho-1D-myo-inositol + H2O = myo-inositol + sn-glycerol 3-phosphate + H(+). It catalyses the reaction 1-O-(1Z-octadecenyl)-sn-glycero-3-phospho-(N-5Z,8Z,11Z,14Z-eicosatetraenoyl)-ethanolamine + H2O = 1-O-(1Z-octadecenyl)-sn-glycero-3-phosphate + N-(5Z,8Z,11Z,14Z-eicosatetraenoyl)-ethanolamine + H(+). It carries out the reaction 1-O-(1Z-octadecenyl)-sn-glycero-3-phospho-(N-9Z-octadecenoyl)-ethanolamine + H2O = 1-O-(1Z-octadecenyl)-sn-glycero-3-phosphate + N-(9Z-octadecenoyl) ethanolamine + H(+). The catalysed reaction is 1-O-(1Z-octadecenyl)-sn-glycero-3-phospho-N-hexadecanoyl-ethanolamine + H2O = 1-O-(1Z-octadecenyl)-sn-glycero-3-phosphate + N-hexadecanoylethanolamine + H(+). The enzyme catalyses N-(4Z,7Z,10Z,13Z,16Z,19Z)-docosahexaenoyl-sn-glycero-3-phosphoethanolamine + H2O = N-(4Z,7Z,10Z,13Z,16Z,19Z)-docosahexaenoyl ethanolamine + sn-glycerol 3-phosphate + H(+). It catalyses the reaction N-eicosanoyl-sn-glycero-3-phosphoethanolamine + H2O = N-eicosanoyl ethanolamine + sn-glycerol 3-phosphate + H(+). It carries out the reaction N-hexadecanoyl-sn-glycero-3-phosphoethanolamine + H2O = N-hexadecanoylethanolamine + sn-glycerol 3-phosphate + H(+). The catalysed reaction is N-(9Z-octadecenoyl)-sn-glycero-3-phosphoethanolamine + H2O = N-(9Z-octadecenoyl) ethanolamine + sn-glycerol 3-phosphate + H(+). The enzyme catalyses N-(5Z,8Z,11Z,14Z-eicosatetraenoyl)-sn-glycero-3-phosphoethanolamine + H2O = N-(5Z,8Z,11Z,14Z-eicosatetraenoyl)-ethanolamine + sn-glycerol 3-phosphate + H(+). Its activity is regulated as follows. Inhibited by EDTA, calcium chloride, and zinc chloride. Enhanced by magnesium chloride. Glycerophosphodiester phosphodiesterase activity can be modulated by G-protein signaling pathways. Hydrolyzes the phosphodiester bond of glycerophosphodiesters such as glycerophosphoinositol (GroPIns) and glycerophosphoethanolamine (GroPEth), to yield a glycerol phosphate and an alcohol. Hydrolyzes glycerophospho-N-acylethanolamines to N-acylethanolamines in the brain and participates in bioactive N-acylethanolamine biosynthesis such as anandamide (an endocannabinoid), N-palmitoylethanolamine (an anti-inflammatory), and N-oleoylethanolamine (an anorexic). In addition, has a lysophospholipase D activity by hydrolyzing N-acyl-lysoplasmenylethanolamine (N-acyl-lysoPlsEt) to N-acylethanolamine. However lysophospholipase D activity is lower than glycerophosphodiester phosphodiesterase activity. Has little or no activity towards glycerophosphocholine. This is Glycerophosphodiester phosphodiesterase 1 from Mus musculus (Mouse).